Reading from the N-terminus, the 274-residue chain is Large ribosomal subunit protein uL2cz/uL2cy (274 aa).

Disordered stretches follow at residues 1–23 (MAIH…SKVK) and 224–274 (NPVD…RRSK).

The protein belongs to the universal ribosomal protein uL2 family. In terms of assembly, part of the 50S ribosomal subunit.

The protein resides in the plastid. It is found in the chloroplast. The sequence is that of Large ribosomal subunit protein uL2cz/uL2cy (rpl2-A) from Lactuca sativa (Garden lettuce).